We begin with the raw amino-acid sequence, 217 residues long: Methylthioribulose-1-phosphate dehydratase (217 aa).

The Zn(2+) site is built by histidine 106 and histidine 108.

This sequence belongs to the aldolase class II family. MtnB subfamily. The cofactor is Zn(2+).

It catalyses the reaction 5-(methylsulfanyl)-D-ribulose 1-phosphate = 5-methylsulfanyl-2,3-dioxopentyl phosphate + H2O. The protein operates within amino-acid biosynthesis; L-methionine biosynthesis via salvage pathway; L-methionine from S-methyl-5-thio-alpha-D-ribose 1-phosphate: step 2/6. In terms of biological role, catalyzes the dehydration of methylthioribulose-1-phosphate (MTRu-1-P) into 2,3-diketo-5-methylthiopentyl-1-phosphate (DK-MTP-1-P). The chain is Methylthioribulose-1-phosphate dehydratase from Xanthomonas euvesicatoria pv. vesicatoria (strain 85-10) (Xanthomonas campestris pv. vesicatoria).